The primary structure comprises 344 residues: MDKKTLSIVGASGYAGGEFLRLALSHPYLEVKQVTSRRFAGEPVHFVHPNLRGRTNLKFIPPEKLEPADILVLALPHGVFAREFDRYSALAPILIDLSADFRLKDPELYRRYYGEHPRPDLLGCFVYAVPELYREALKGADWIAGAGCNATATLLGLYPLLKAGVLKPTPIFVTLLISTSAAGAEASPASHHPERAGSIRVYKPTGHRHTAEVVENLPGRPEVHLTAIATDRVRGILMTAQCFVQDGWSERDVWQAYREAYAGEPFIRLVKQKKGVHRYPDPRFVQGTNYADIGFELEEDTGRLVVMTAIDNLVKGTAGHALQALNVRMGWPETLGLDFPGLHP.

NADP(+) is bound by residues 12 to 15 (SGYA), 36 to 38 (SRR), and leucine 75. The active site involves cysteine 148. Serine 180, alanine 184, and asparagine 312 together coordinate NADP(+).

Belongs to the NAGSA dehydrogenase family. Type 1 subfamily. LysY sub-subfamily. In terms of assembly, homotetramer. Interacts with LysW. May form a ternary complex with LysW and LysZ.

Its subcellular location is the cytoplasm. It catalyses the reaction [amino-group carrier protein]-C-terminal-N-(1-carboxy-5-oxopentan-1-yl)-L-glutamine + phosphate + NADP(+) = [amino-group carrier protein]-C-terminal-N-(1-carboxy-5-phosphooxy-5-oxopentan-1-yl)-L-glutamine + NADPH + H(+). It participates in amino-acid biosynthesis; L-lysine biosynthesis via AAA pathway; L-lysine from L-alpha-aminoadipate (Thermus route): step 3/5. Functionally, catalyzes the NADPH-dependent reduction of [LysW]-aminoadipate 6-phosphate to yield [LysW]-aminoadipate 6-semialdehyde. This Thermus thermophilus (strain ATCC BAA-163 / DSM 7039 / HB27) protein is [LysW]-L-2-aminoadipate 6-phosphate reductase.